A 274-amino-acid polypeptide reads, in one-letter code: Nitrate import ATP-binding protein NrtD (274 aa).

Residues 17-250 enclose the ABC transporter domain; sequence LHFDCVGKTF…RPREREAVVE (234 aa). 53 to 60 contacts ATP; sequence GHSGCGKS.

The protein belongs to the ABC transporter superfamily. Nitrate/nitrite/cyanate uptake transporter (NitT) (TC 3.A.1.16) family. In terms of assembly, the complex is composed of two ATP-binding proteins (NrtC and NrtD), two transmembrane proteins (NrtB) and a solute-binding protein (NrtA).

Its subcellular location is the cell inner membrane. The catalysed reaction is nitrate(out) + ATP + H2O = nitrate(in) + ADP + phosphate + H(+). Functionally, part of the ABC transporter complex NrtABCD involved in nitrate uptake. The complex is probably also involved in nitrite transport. Probably responsible for energy coupling to the transport system. This Synechococcus elongatus (strain ATCC 33912 / PCC 7942 / FACHB-805) (Anacystis nidulans R2) protein is Nitrate import ATP-binding protein NrtD.